The primary structure comprises 244 residues: Ribonuclease 3 (244 aa).

In terms of domain architecture, RNase III spans 21–148 (DHAPLLEAWG…MLGAIYLHHG (128 aa)). Glutamate 61 is a Mg(2+) binding site. Aspartate 65 is an active-site residue. Mg(2+) is bound by residues aspartate 134 and glutamate 137. Glutamate 137 is an active-site residue. In terms of domain architecture, DRBM spans 175-242 (DWKTVLLEKL…AKQAVQKLNE (68 aa)).

It belongs to the ribonuclease III family. As to quaternary structure, homodimer. The cofactor is Mg(2+).

Its subcellular location is the cytoplasm. The catalysed reaction is Endonucleolytic cleavage to 5'-phosphomonoester.. In terms of biological role, digests double-stranded RNA. Involved in the processing of primary rRNA transcript to yield the immediate precursors to the large and small rRNAs (23S and 16S). Processes some mRNAs, and tRNAs when they are encoded in the rRNA operon. Processes pre-crRNA and tracrRNA of type II CRISPR loci if present in the organism. The chain is Ribonuclease 3 from Corynebacterium jeikeium (strain K411).